Reading from the N-terminus, the 295-residue chain is Ribosomal RNA small subunit methyltransferase A (295 aa).

The S-adenosyl-L-methionine site is built by Asn40, Val42, Gly67, Glu88, Asp118, and Asn135.

It belongs to the class I-like SAM-binding methyltransferase superfamily. rRNA adenine N(6)-methyltransferase family. RsmA subfamily.

The protein localises to the cytoplasm. It catalyses the reaction adenosine(1518)/adenosine(1519) in 16S rRNA + 4 S-adenosyl-L-methionine = N(6)-dimethyladenosine(1518)/N(6)-dimethyladenosine(1519) in 16S rRNA + 4 S-adenosyl-L-homocysteine + 4 H(+). In terms of biological role, specifically dimethylates two adjacent adenosines (A1518 and A1519) in the loop of a conserved hairpin near the 3'-end of 16S rRNA in the 30S particle. May play a critical role in biogenesis of 30S subunits. This Arthrobacter sp. (strain FB24) protein is Ribosomal RNA small subunit methyltransferase A.